A 441-amino-acid polypeptide reads, in one-letter code: Chitinase-like protein Idgf3 (441 aa).

The signal sequence occupies residues 1–23; the sequence is MSGSLWLSLALSLAVLAQFKVSA. The region spanning 25 to 441 is the GH18 domain; it reads PNLVCFYDSQ…MLRAIKYRLL (417 aa). A disulfide bridge links C29 with C56. N221 is a glycosylation site (N-linked (GlcNAc...) asparagine). The segment at 310-331 is disordered; sequence GDSGMPVVSSTQGPAPAGPQSK. C342 and C425 are joined by a disulfide.

This sequence belongs to the glycosyl hydrolase 18 family. IDGF subfamily. Post-translationally, glycosylated.

The protein localises to the secreted. Its function is as follows. Cooperates with insulin-like peptides to stimulate the proliferation, polarization and motility of imaginal disk cells. May act by stabilizing the binding of insulin-like peptides to its receptor through a simultaneous interaction with both molecules to form a multiprotein signaling complex. The sequence is that of Chitinase-like protein Idgf3 (Idgf3) from Drosophila simulans (Fruit fly).